The chain runs to 630 residues: Peptidyl-prolyl cis-trans isomerase cyp15 (630 aa).

The segment at 1-46 is disordered; sequence MPEDSNTNDNNKRPLEDNNAVDGESDDDIGPMLPPPPGEDAPRKKK. WD repeat units follow at residues 70–108, 113–152, 157–198, 203–242, and 258–301; these read MHRD…IEFV, SHLS…MINM, YKPK…KPLH, MHSK…ALPD, and RKKK…REYD. Residues 475–629 form the PPIase cyclophilin-type domain; the sequence is LGTSAIIRTT…DDIKIINIDI (155 aa).

It belongs to the cyclophilin-type PPIase family.

It carries out the reaction [protein]-peptidylproline (omega=180) = [protein]-peptidylproline (omega=0). In terms of biological role, PPIases accelerate the folding of proteins. It catalyzes the cis-trans isomerization of proline imidic peptide bonds in oligopeptides. This chain is Peptidyl-prolyl cis-trans isomerase cyp15 (cyp15), found in Rhizopus delemar (strain RA 99-880 / ATCC MYA-4621 / FGSC 9543 / NRRL 43880) (Mucormycosis agent).